The sequence spans 599 residues: Omega-hydroxyceramide transacylase (599 aa).

In terms of domain architecture, PNPLA spans 16–185 (ISFSGSGFLS…TSMQPCSFWT (170 aa)). The GXSXG motif lies at 51 to 55 (GTSAG). S53 functions as the Nucleophile in the catalytic mechanism. Catalysis depends on D172, which acts as the Proton acceptor. Residues 172–174 (DGG) carry the DGA/G motif. The segment at 289–563 (PPPPSLQNLP…PASKLKSAPC (275 aa)) is disordered. Polar residues-rich tracts occupy residues 325-335 (SSAAPSVQTPE) and 350-362 (VSIS…SPLS). The span at 443–454 (SPESPRLLLRSS) shows a compositional bias: low complexity. Residues 468-478 (PLSPSTPPAGP) are compositionally biased toward pro residues. Residues 490–501 (ATGSPALSQLTG) are compositionally biased toward polar residues. Low complexity predominate over residues 551–563 (SKKPASKLKSAPC).

In terms of tissue distribution, specifically expressed in skin by keratinocytes, at the boundary area between the nucleated stratum granulosum and the denucleated stratum corneum in the epidermis (at protein level). Also expressed in stomach and other surface lining tissues like intestine and tongue. Also detected in testis as well as in other tissues but at very low level.

It localises to the cytoplasm. It catalyses the reaction an N-(omega-hydroxy-ultra-long chain fatty acyl)-sphingoid base + a (9Z,12Z)-octadecadienoyl-containing triacyl-sn-glycerol = an N-[omega-(9Z,12Z-octadecadienoyloxy)-O-ultra-long chain fatty acyl]-sphingoid base + a diacylglycerol. The enzyme catalyses an N-(omega-hydroxy-ultra-long chain fatty acyl)-sphing-4-enine + a (9Z,12Z)-octadecadienoyl-containing triacyl-sn-glycerol = an N-(omega-(9Z,12Z-octadecadienoyloxy)-ultra-long chain fatty acyl)-sphing-4-enine + a diacylglycerol. It carries out the reaction N-(28-hydroxyoctacosanoyl)-sphing-4-enine + a (9Z,12Z)-octadecadienoyl-containing triacyl-sn-glycerol = N-(28-(9Z,12Z-octadecadienoyloxy)-octacosanoyl)-sphing-4-enine + a diacylglycerol. The catalysed reaction is N-(30-hydroxytriacontanoyl)-sphing-4-enine + 1,2,3-tri-(9Z,12Z)-octadecadienoylglycerol = N-[30-(9Z,12Z-octadecadienoyloxy)-triacontanoyl]-sphing-4-enine + di-(9Z,12Z)-octadecadienoylglycerol. It catalyses the reaction N-(32-hydroxydotriacontanoyl)-sphing-4-enine + a (9Z,12Z)-octadecadienoyl-containing triacyl-sn-glycerol = N-(32-(9Z,12Z-octadecadienoyloxy)-dotricontanoyl)-sphing-4-enine + a diacylglycerol. The enzyme catalyses N-(32-hydroxydotriacontenoyl)-sphing-4-enine + a (9Z,12Z)-octadecadienoyl-containing triacyl-sn-glycerol = an N-(32-(9Z,12Z-octadecadienoyloxy)-dotriacontenoyl)-sphing-4-enine + a diacylglycerol. It carries out the reaction an N-(34-hydroxytetratriacontenoyl)-sphing-4-enine + a (9Z,12Z)-octadecadienoyl-containing triacyl-sn-glycerol = an N-(34-(9Z,12Z-octadecadienoyloxy)-tetratriacontenoyl)-sphing-4-enine + a diacylglycerol. The catalysed reaction is an N-(34-hydroxytetratriacontadienoyl)-sphing-4-enine + a (9Z,12Z)-octadecadienoyl-containing triacyl-sn-glycerol = an N-(34-(9Z,12Z-octadecadienoyloxy)-tetratriacontadienoyl)-sphing-4-enine + a diacylglycerol. It catalyses the reaction an N-(36-hydroxyhexatriacontenoyl)-sphing-4-enine + a (9Z,12Z)-octadecadienoyl-containing triacyl-sn-glycerol = an N-(36-(9Z,12Z-octadecadienoyloxy)-hexatriacontenoyl)-sphing-4-enine + a diacylglycerol. The enzyme catalyses an N-(36-hydroxyhexatriacontadienoyl)-sphing-4-enine + a (9Z,12Z)-octadecadienoyl-containing triacyl-sn-glycerol = an N-(36-(9Z,12Z-octadecadienoyloxy)-hexatriacontadienoyl)-sphing-4-enine + a diacylglycerol. It carries out the reaction an N-(38-hydroxyoctatriacontenoyl)-sphing-4-enine + a (9Z,12Z)-octadecadienoyl-containing triacyl-sn-glycerol = an N-(38-(9Z,12Z-octadecadienoyloxy)-octatriacontenoyl)-sphing-4-enine + a diacylglycerol. Omega-hydroxyceramide transacylase involved in the synthesis of omega-O-acylceramides (esterified omega-hydroxyacyl-sphingosine; EOS), which are extremely hydrophobic lipids involved in skin barrier formation. Catalyzes the last step of the synthesis of omega-O-acylceramides by transferring linoleic acid from triglycerides to an omega-hydroxyceramide. Omega-O-acylceramides, are required for the biogenesis of lipid lamellae in the stratum corneum and the formation of the cornified lipid envelope which are essential for the epidermis barrier function. These lipids also play a role in keratinocyte differentiation. May also act on omega-hydroxylated ultra-long chain fatty acids (omega-OH ULCFA) and acylglucosylceramides (GlcEOS). This Mus musculus (Mouse) protein is Omega-hydroxyceramide transacylase.